We begin with the raw amino-acid sequence, 144 residues long: Aklanonic acid methyl ester cyclase AcmA (144 aa).

Residues N51 and Q105 each coordinate substrate.

This sequence belongs to the polyketide cyclase DnrD family. In terms of assembly, homotetramer.

It catalyses the reaction methyl aklanonate = aklaviketone. It functions in the pathway antibiotic biosynthesis; daunorubicin biosynthesis. The protein operates within antibiotic biosynthesis; carminomycin biosynthesis. It participates in antibiotic biosynthesis; rhodomycin biosynthesis. Its pathway is antibiotic biosynthesis; aclacinomycin biosynthesis. Involved in the biosynthesis of aklavinone which is an important precursor common to the formation of the clinically significant anthracyclines such as carminomycin, daunorubicin (daunomycin), rhodomycin, aclacinomycin T (aklavin) and aclacinomycin A (aclarubicin). These compounds are aromatic polyketide antibiotics that exhibit high cytotoxicity and are widely applied in the chemotherapy of a variety of cancers. Catalyzes the cyclization of aklanonic acid methyl ester to yield aklaviketone. It is also able to use nogalonic acid methyl ester as substrate, but produces exclusively auraviketone with C9-R stereochemistry. The protein is Aklanonic acid methyl ester cyclase AcmA (acma) of Streptomyces galilaeus.